The chain runs to 573 residues: Developmental and secondary metabolism regulator VEL1 (573 aa).

A Velvet domain is found at 26–220 (NRHLWYQLTV…ADQGCRVRIR (195 aa)). The short motif at 40 to 45 (ERARAC) is the Nuclear localization signal element. The segment at 222 to 520 (DVRMRKRDGK…STGGKRKHDH (299 aa)) is disordered. A compositionally biased stretch (basic and acidic residues) spans 230–245 (GKGSGFDRRGEEEYSR). Pro residues-rich tracts occupy residues 291–310 (APPP…PPAA) and 341–351 (APIPPATPTGP). Residues 352 to 363 (YPTSSAAPSPYA) are compositionally biased toward low complexity. The span at 379–389 (PPAPSASPAPP) shows a compositional bias: pro residues. Polar residues predominate over residues 432 to 448 (TPASQPTYSTPASQPTY). Residues 458 to 475 (SAPPPAPYSAPAPPPPRP) show a composition bias toward pro residues. Residues 476–504 (SMSQSSLAPLKIASLVSPLPPIEAQTEPL) are PEST.

The protein belongs to the velvet family. VeA subfamily. As to quaternary structure, component of the heterotrimeric velvet complex composed of LAE1, VEL1 and VEL2; VEL1 acting as a bridging protein between LAE1 and VEL2. Interacts with LAE1.

Its subcellular location is the nucleus. It localises to the cytoplasm. In terms of biological role, component of the velvet transcription factor complex that controls sexual/asexual developmental ratio in response to light, promoting sexual development in the darkness while stimulating asexual sporulation under illumination. The velvet complex hat acts as a global regulator for secondary metabolite gene expression. Regulates expression of the carbohydrate-active enzyme gene clusters. The protein is Developmental and secondary metabolism regulator VEL1 of Hypocrea jecorina (strain QM6a) (Trichoderma reesei).